A 77-amino-acid polypeptide reads, in one-letter code: Putative snRNP Sm-like protein (77 aa).

Residues 4–76 enclose the Sm domain; it reads RPLDVLNRSL…VVFVSPAPGG (73 aa).

This sequence belongs to the snRNP Sm proteins family.

In Archaeoglobus fulgidus (strain ATCC 49558 / DSM 4304 / JCM 9628 / NBRC 100126 / VC-16), this protein is Putative snRNP Sm-like protein.